The following is a 67-amino-acid chain: ATP synthase F(0) complex subunit 8 (67 aa).

A helical membrane pass occupies residues 8-24 (TWFTTVLASSITLFILM). Position 54 is an N6-acetyllysine; alternate (K54). Residue K54 is modified to N6-succinyllysine; alternate. K57 bears the N6-acetyllysine mark.

The protein belongs to the ATPase protein 8 family. As to quaternary structure, component of the ATP synthase complex composed at least of ATP5F1A/subunit alpha, ATP5F1B/subunit beta, ATP5MC1/subunit c (homooctomer), MT-ATP6/subunit a, MT-ATP8/subunit 8, ATP5ME/subunit e, ATP5MF/subunit f, ATP5MG/subunit g, ATP5MK/subunit k, ATP5MJ/subunit j, ATP5F1C/subunit gamma, ATP5F1D/subunit delta, ATP5F1E/subunit epsilon, ATP5PF/subunit F6, ATP5PB/subunit b, ATP5PD/subunit d, ATP5PO/subunit OSCP. ATP synthase complex consists of a soluble F(1) head domain (subunits alpha(3) and beta(3)) - the catalytic core - and a membrane F(0) domain - the membrane proton channel (subunits c, a, 8, e, f, g, k and j). These two domains are linked by a central stalk (subunits gamma, delta, and epsilon) rotating inside the F1 region and a stationary peripheral stalk (subunits F6, b, d, and OSCP). Interacts with PRICKLE3.

The protein localises to the mitochondrion membrane. Subunit 8, of the mitochondrial membrane ATP synthase complex (F(1)F(0) ATP synthase or Complex V) that produces ATP from ADP in the presence of a proton gradient across the membrane which is generated by electron transport complexes of the respiratory chain. ATP synthase complex consist of a soluble F(1) head domain - the catalytic core - and a membrane F(1) domain - the membrane proton channel. These two domains are linked by a central stalk rotating inside the F(1) region and a stationary peripheral stalk. During catalysis, ATP synthesis in the catalytic domain of F(1) is coupled via a rotary mechanism of the central stalk subunits to proton translocation. In vivo, can only synthesize ATP although its ATP hydrolase activity can be activated artificially in vitro. Part of the complex F(0) domain. This Cricetulus griseus (Chinese hamster) protein is ATP synthase F(0) complex subunit 8.